The chain runs to 436 residues: MAKPVVAIVGRPNVGKSTIFNRIVGERVSIVEDVPGVTRDRIYNSAEWLGKEFNIIDTGGIDLSDEPFLEQIRAQAEIAIDEADVIIFITNGREGVTDADEQVAKILYRSNKPIVLAINKVDNPEMRDQIYDFYSLGFGEPYPISGSHGLGLGDMLDAVRAHFPKEEEEEYPDDTVKFSLIGRPNVGKSSILNALLGEDRVIVSDIAGTTRDAIDTTYTFDGQDYVMIDTAGMRKRGKVYESTEKYSVLRAMRAIERSDVVLVVINAEEGIREQDKRIAGYAHDAGRAIIIVVNKWDAINKDEKTINVWTEDIREQFQFLSYAPIVFVSAKTKQRLNNLFPLINQVSDNHSLRVQSSMLNDVISDAVAMNPSPMDKGKRLKIFYTTQVAVKPPTFVVFVNDPELMHFSYERFLENRIREAFPFEGTPIRVIARKRK.

EngA-type G domains lie at 4–167 (PVVA…PKEE) and 176–351 (VKFS…DNHS). GTP is bound by residues 10-17 (GRPNVGKS), 57-61 (DTGGI), 119-122 (NKVD), 182-189 (GRPNVGKS), 229-233 (DTAGM), and 294-297 (NKWD). Residues 352–436 (LRVQSSMLND…PIRVIARKRK (85 aa)) form the KH-like domain.

Belongs to the TRAFAC class TrmE-Era-EngA-EngB-Septin-like GTPase superfamily. EngA (Der) GTPase family. In terms of assembly, associates with the 50S ribosomal subunit.

GTPase that plays an essential role in the late steps of ribosome biogenesis. This is GTPase Der from Listeria monocytogenes serotype 4b (strain F2365).